A 515-amino-acid polypeptide reads, in one-letter code: MTKRALISVSDKNGIVEFAQELTKLGWEIISTGGTKVALDNAGVATIAIDDVTGFPEMMDGRVKTLHPNIHGGLLARRDVDSHLQAAKDHEIGLIDLVVVNLYPFKETILRPDVTYDLAVENIDIGGPSMLRSAAKNHASVTVVVDPADYPTVLGEIAEQGQTTYPTRQRLAAKVFRHTAAYDALIADYFTKQVGEDKPEKLTITYDLNQPMRYGENPQQNADFYQNALPTDYSIAAAKQLNGKELSFNNIRDADAAIRIIRDFKDRPTVVALKHMNPCGIGQAETIEKAWDYAYEADPVSIFGGIVVLNREVDAATAEKMHPIFLEIIIAPSYSAEALAILTNKKKNLRILELAFDAQDASEVEKEFTGVVGGLLVQDQDVVVESPADWQVVTERQPSEQEWAAMEFAWKSSKYVKSNGIIITNDKMTLGVGPGQTNRVASVRIAIEQAKDRLEGAVLASDAFFPFADNVEEIAAAGIKAIIQPGGSVRDQDSIDMANKYGLTMVFTGVRHFRH.

The MGS-like domain maps to 1–145; it reads MTKRALISVS…KNHASVTVVV (145 aa).

It belongs to the PurH family.

It catalyses the reaction (6R)-10-formyltetrahydrofolate + 5-amino-1-(5-phospho-beta-D-ribosyl)imidazole-4-carboxamide = 5-formamido-1-(5-phospho-D-ribosyl)imidazole-4-carboxamide + (6S)-5,6,7,8-tetrahydrofolate. The enzyme catalyses IMP + H2O = 5-formamido-1-(5-phospho-D-ribosyl)imidazole-4-carboxamide. It participates in purine metabolism; IMP biosynthesis via de novo pathway; 5-formamido-1-(5-phospho-D-ribosyl)imidazole-4-carboxamide from 5-amino-1-(5-phospho-D-ribosyl)imidazole-4-carboxamide (10-formyl THF route): step 1/1. Its pathway is purine metabolism; IMP biosynthesis via de novo pathway; IMP from 5-formamido-1-(5-phospho-D-ribosyl)imidazole-4-carboxamide: step 1/1. This chain is Bifunctional purine biosynthesis protein PurH, found in Streptococcus suis (strain 98HAH33).